Consider the following 2222-residue polypeptide: Protein SWEETIE (2222 aa).

HEAT repeat units follow at residues 37–75, 228–265, 331–368, 510–540, 541–578, 611–648, 768–807, 898–936, 968–1008, and 1029–1066; these read LLCFEILSDLISAIDEEPKESLLVTQRKCEDALYSLVTL, SEFDTLASYCVKGIEDSESSVRDAFAEALGSLLALGMH, SELQDYSLPIMDMLRGDSSIDAHALACVLYILRVGVID, PARLPRSVLEVSKKMLTESRRNVTVASSEKE, AGWLLLSSLLNSMPKEEFGDQDFDILILWTDVFAGNPE, CNDGILLQPVLANLRSALSCVSTMANKRFSDVKTLVDI, QGMLSLLSVIQQCLKAGKKQQWRTASLTNICAGLLAGLKA, MALSSLVPATVNSVSSLTKTSVLGLKIWALHGLLLTIEA, QGIG…WQEI, and VSVHIHVKNLLMTLASRQPIIRRLSVSTLRHLVEKDPV. The interval 1133–1165 is disordered; the sequence is IAENDPAYTRENLGDDDEDMVSSSSGKSIRANP. HEAT repeat units lie at residues 1238–1269, 1270–1306, 1312–1354, 1372–1410, 1434–1474, 1550–1586, 1783–1820, 1836–1874, 1880–1917, and 1966–2006; these read MRPIGVGLLSTILEKFKLVADPELPGHLLLEQ, YQAQLLSAVRTALDANSGPVLLEAGLQLATKIMTSGI, VAVK…AHAS, VEFEALLPMFSKSSDLLGRYWIQVLKGYSYICLCQNLKK, EAWP…LEAE, DLCQELLQVLSYSFHMDSSWDILAVSVVQQISQNCPK, VMLKSCQISIAAVVKDSNVQVQATVLQVLKSLVQRYNN, GDIVSLMQRALLKPVNTESVVIAGECLRFIMLLQTHSIT, GFMSLFLEVVLVVFSKTSDGVSQEVLELRNVAVRLVSH, and AMDI…QVST. The disordered stretch occupies residues 1992-2203; it reads EALSTMPTSF…DESSKEHVGA (212 aa). Over residues 1996-2009 the composition is skewed to polar residues; the sequence is TMPTSFNQVSTVES. Acidic residues predominate over residues 2010–2027; the sequence is GTDEEEEEEEDDDDDDWD. Polar residues predominate over residues 2028–2040; the sequence is TFQSFPASTNLEG. Residues 2062–2072 show a composition bias toward acidic residues; that stretch reads QDDESNAEETD. 2 stretches are compositionally biased toward basic and acidic residues: residues 2073 to 2096 and 2108 to 2124; these read DQHLASDHATDITREDSNDKSKEV and TREDSVDKSKEVEEETV. The span at 2150–2164 shows a compositional bias: polar residues; sequence NEQSVESKNLESENI. The span at 2191 to 2202 shows a compositional bias: basic and acidic residues; the sequence is SPEDESSKEHVG.

The protein belongs to the HEATR5 family.

May regulate multiple metabolic, hormonal and stress-related pathways. Required for carbohydrate metabolism and homoeostasis. May also monitor ethylene biosynthesis and senescence. The sequence is that of Protein SWEETIE from Arabidopsis thaliana (Mouse-ear cress).